The sequence spans 657 residues: Probable Xaa-Pro aminopeptidase P (657 aa).

Mn(2+) is bound by residues Asp-453, Asp-464, Glu-562, and Glu-576.

The protein belongs to the peptidase M24B family. The cofactor is Mn(2+).

The catalysed reaction is Release of any N-terminal amino acid, including proline, that is linked to proline, even from a dipeptide or tripeptide.. In terms of biological role, catalyzes the removal of a penultimate prolyl residue from the N-termini of peptides. In Talaromyces stipitatus (strain ATCC 10500 / CBS 375.48 / QM 6759 / NRRL 1006) (Penicillium stipitatum), this protein is Probable Xaa-Pro aminopeptidase P (ampp).